Here is a 108-residue protein sequence, read N- to C-terminus: Small ribosomal subunit protein eS25B (108 aa).

The span at Met1–Gly20 shows a compositional bias: low complexity. The interval Met1–Lys30 is disordered. Pro2 bears the N,N-dimethylproline; by NTM1 mark. Residues Lys21 to Lys30 are compositionally biased toward basic residues.

The protein belongs to the eukaryotic ribosomal protein eS25 family. As to quaternary structure, component of the small ribosomal subunit (SSU). Mature yeast ribosomes consist of a small (40S) and a large (60S) subunit. The 40S small subunit contains 1 molecule of ribosomal RNA (18S rRNA) and 33 different proteins (encoded by 57 genes). The large 60S subunit contains 3 rRNA molecules (25S, 5.8S and 5S rRNA) and 46 different proteins (encoded by 81 genes).

It is found in the cytoplasm. Its function is as follows. Component of the ribosome, a large ribonucleoprotein complex responsible for the synthesis of proteins in the cell. The small ribosomal subunit (SSU) binds messenger RNAs (mRNAs) and translates the encoded message by selecting cognate aminoacyl-transfer RNA (tRNA) molecules. The large subunit (LSU) contains the ribosomal catalytic site termed the peptidyl transferase center (PTC), which catalyzes the formation of peptide bonds, thereby polymerizing the amino acids delivered by tRNAs into a polypeptide chain. The nascent polypeptides leave the ribosome through a tunnel in the LSU and interact with protein factors that function in enzymatic processing, targeting, and the membrane insertion of nascent chains at the exit of the ribosomal tunnel. This Saccharomyces cerevisiae (strain ATCC 204508 / S288c) (Baker's yeast) protein is Small ribosomal subunit protein eS25B.